Consider the following 254-residue polypeptide: Uracil-DNA glycosylase (254 aa).

Catalysis depends on Asp78, which acts as the Proton acceptor.

The protein belongs to the uracil-DNA glycosylase (UDG) superfamily. UNG family.

Its subcellular location is the cytoplasm. The catalysed reaction is Hydrolyzes single-stranded DNA or mismatched double-stranded DNA and polynucleotides, releasing free uracil.. Its function is as follows. Excises uracil residues from the DNA which can arise as a result of misincorporation of dUMP residues by DNA polymerase or due to deamination of cytosine. This chain is Uracil-DNA glycosylase, found in Bordetella petrii (strain ATCC BAA-461 / DSM 12804 / CCUG 43448).